Consider the following 686-residue polypeptide: Probable metal-nicotianamine transporter YSL4 (686 aa).

Helical transmembrane passes span 27-47, 53-73, 96-116, 151-171, 203-223, 264-284, 308-328, 373-393, 405-425, 441-461, 488-508, 554-574, 596-616, and 629-649; these read WLVT…FCFV, MMTG…FFLL, MFLI…GFAT, FFLI…IMII, VMTI…QWFY, IVNF…YPYL, VFIS…ILVT, IPMF…MVAM, VGVL…ATGL, IFAA…VSGI, AMIA…PCIF, CVEL…LVLV, FFAG…LLLW, and AAVA…SALL.

This sequence belongs to the YSL (TC 2.A.67.2) family.

Its subcellular location is the membrane. May be involved in the transport of nicotianamine-chelated metals. In Oryza sativa subsp. japonica (Rice), this protein is Probable metal-nicotianamine transporter YSL4 (YSL4).